The sequence spans 643 residues: Macrolide export ATP-binding/permease protein MacB (643 aa).

An ABC transporter domain is found at 6-244 (IELKGVSRVF…QVRSPFGVRH (239 aa)). 42–49 (GASGSGKS) is a binding site for ATP. A run of 4 helical transmembrane segments spans residues 270-290 (VLTLLGIVIGVASVIVMLAIG), 518-538 (LTILLGSIAAISLLVGGIGVM), 569-589 (FLIEAVVVSALGGLIGVVIGL), and 606-626 (LMPIVWAFGCAFVTGLLFGYL).

Belongs to the ABC transporter superfamily. Macrolide exporter (TC 3.A.1.122) family. In terms of assembly, homodimer.

Its subcellular location is the cell inner membrane. In terms of biological role, non-canonical ABC transporter that contains transmembrane domains (TMD), which form a pore in the inner membrane, and an ATP-binding domain (NBD), which is responsible for energy generation. Confers resistance against macrolides. In Wolinella succinogenes (strain ATCC 29543 / DSM 1740 / CCUG 13145 / JCM 31913 / LMG 7466 / NCTC 11488 / FDC 602W) (Vibrio succinogenes), this protein is Macrolide export ATP-binding/permease protein MacB.